A 106-amino-acid chain; its full sequence is Transcription initiation factor IIA subunit 2 (106 aa).

It belongs to the TFIIA subunit 2 family. TFIIA is a heterodimer of the large unprocessed subunit 1 and a small subunit gamma. It was originally believed to be a heterotrimer of an alpha, a beta and a gamma subunit.

The protein localises to the nucleus. Functionally, TFIIA is a component of the transcription machinery of RNA polymerase II and plays an important role in transcriptional activation. TFIIA in a complex with TBP mediates transcriptional activity. Protein involved in the resistance to X.oryzae. In Oryza sativa subsp. indica (Rice), this protein is Transcription initiation factor IIA subunit 2 (TFIIAy).